The chain runs to 168 residues: Endoribonuclease YbeY (168 aa).

Positions 123, 127, and 133 each coordinate Zn(2+).

It belongs to the endoribonuclease YbeY family. It depends on Zn(2+) as a cofactor.

The protein resides in the cytoplasm. In terms of biological role, single strand-specific metallo-endoribonuclease involved in late-stage 70S ribosome quality control and in maturation of the 3' terminus of the 16S rRNA. This chain is Endoribonuclease YbeY, found in Francisella tularensis subsp. holarctica (strain LVS).